The sequence spans 206 residues: HTH-type transcriptional regulator BetI (206 aa).

In terms of domain architecture, HTH tetR-type spans 8–68 (PLRRKALVDA…ETIRSLLRDL (61 aa)). Positions 31–50 (TMSDIAREAGVSAALAHHYF) form a DNA-binding region, H-T-H motif.

It functions in the pathway amine and polyamine biosynthesis; betaine biosynthesis via choline pathway [regulation]. Repressor involved in the biosynthesis of the osmoprotectant glycine betaine. It represses transcription of the choline transporter BetT and the genes of BetAB involved in the synthesis of glycine betaine. The protein is HTH-type transcriptional regulator BetI of Agrobacterium fabrum (strain C58 / ATCC 33970) (Agrobacterium tumefaciens (strain C58)).